A 232-amino-acid chain; its full sequence is 5'-methylthioadenosine/S-adenosylhomocysteine nucleosidase (232 aa).

Glu-12 acts as the Proton acceptor in catalysis. Substrate contacts are provided by residues Gly-78, Ile-152, and 173–174; that span reads ME. Catalysis depends on Asp-197, which acts as the Proton donor.

The protein belongs to the PNP/UDP phosphorylase family. MtnN subfamily. Homodimer.

It catalyses the reaction S-adenosyl-L-homocysteine + H2O = S-(5-deoxy-D-ribos-5-yl)-L-homocysteine + adenine. The enzyme catalyses S-methyl-5'-thioadenosine + H2O = 5-(methylsulfanyl)-D-ribose + adenine. It carries out the reaction 5'-deoxyadenosine + H2O = 5-deoxy-D-ribose + adenine. It functions in the pathway amino-acid biosynthesis; L-methionine biosynthesis via salvage pathway; S-methyl-5-thio-alpha-D-ribose 1-phosphate from S-methyl-5'-thioadenosine (hydrolase route): step 1/2. Its function is as follows. Catalyzes the irreversible cleavage of the glycosidic bond in both 5'-methylthioadenosine (MTA) and S-adenosylhomocysteine (SAH/AdoHcy) to adenine and the corresponding thioribose, 5'-methylthioribose and S-ribosylhomocysteine, respectively. Also cleaves 5'-deoxyadenosine, a toxic by-product of radical S-adenosylmethionine (SAM) enzymes, into 5-deoxyribose and adenine. Thus, is required for in vivo function of the radical SAM enzymes biotin synthase and lipoic acid synthase, that are inhibited by 5'-deoxyadenosine accumulation. This chain is 5'-methylthioadenosine/S-adenosylhomocysteine nucleosidase, found in Pectobacterium carotovorum subsp. carotovorum (strain PC1).